A 931-amino-acid polypeptide reads, in one-letter code: Probable ubiquitin-like-specific protease 2B (931 aa).

The tract at residues 204–224 (SLSDRSALSEASDSEDDEEDW) is disordered. Residues 215 to 224 (SDSEDDEEDW) show a composition bias toward acidic residues. Catalysis depends on residues histidine 489, aspartate 522, and cysteine 577. The disordered stretch occupies residues 825–931 (HEEEIDESPP…PTGEAEEMEK (107 aa)). Residues 839–851 (SLKSATVGSNTAD) are compositionally biased toward polar residues. Residues 873-904 (NDRDEEKPLEHDLEIGDKTSEDVGDDCDQKEP) show a composition bias toward basic and acidic residues.

Belongs to the peptidase C48 family.

Its function is as follows. Protease that catalyzes two essential functions in the SUMO pathway: processing of full-length SUMOs to their mature forms and deconjugation of SUMO from targeted proteins. This Arabidopsis thaliana (Mouse-ear cress) protein is Probable ubiquitin-like-specific protease 2B (ULP2B).